Reading from the N-terminus, the 780-residue chain is MELRRGKTFIKSSVQISHEKLIDSPAKEDPDKWPLSLGEQQRAYGEKSSQTSPCSQGYGRCPNKEVLSDPEGGPVPLCGTTFKLVRKSKTHDSVPGAVKAAAPTGQMVGSTSFSETPGGQRMIDYRHFVPQMPFVPAVAKSIPRKRISLKRSKKCFRNLFHMRRSKTENLASLSAKGKNLSPSGVPAQQGTAFLSMGEGLGLDSLCQDLSDSEFLHDSPFDLCSALCEDVASLKSFDSLTGCGEIFADGSSVPSVELKDGPESPAHSPQALDCKTPCGPAQGGMEQLMSPAQNEASDFNKFWDSVNRSVQQQQRALMGPWLTSPEGTETDQTRLDTSGLAELPLFPCRGPPSGSKASSIDTGTPKSEQPESVSTSDEGYYDSFSPGLEEEKKEAASPGTPAATFPRDSYSGDALYELFYDPSEAPVGPILDDDCVSESLSGPALGTPLSMCSFRVGAEENLAPAPGPDLLSQGFLQSTWKGKECLLKLCDTELAITMGIVNWLRRTPPATSPTPASTPAPTPALVLREPAAPPDPHRVLRGASVGVKGREDQATTCFPPSRQEPWAHSGTKNLLVRECEVLGEPARGSKTPSKDDSLEEGTQDFSEGQSSSEATMTSISGNNKAVTSATCLSSQKELGTPGNLRYSQGPLRPGHRGSALDPGPMLVGCVTHVAALQIYPDSNSPRQDKGNGLFWKPQAWGPNILQKNPISSKPNEAAGCGLSSSASPQDQKCRDLFLDLNQLKLEPSRLGPQACSSVDSQPQQLCPRAPEQVPHRGSVGS.

The span at 20 to 32 shows a compositional bias: basic and acidic residues; the sequence is KLIDSPAKEDPDK. Disordered stretches follow at residues 20–59, 341–407, 547–569, 582–617, 635–659, 706–729, and 749–780; these read KLIDSPAKEDPDKWPLSLGEQQRAYGEKSSQTSPCSQGYG, ELPL…FPRD, KGREDQATTCFPPSRQEPWAHSG, GEPARGSKTPSKDDSLEEGTQDFSEGQSSSEATMTS, KELGTPGNLRYSQGPLRPGHRGSAL, KNPISSKPNEAAGCGLSSSASPQD, and LGPQACSSVDSQPQQLCPRAPEQVPHRGSVGS. Positions 354-376 are enriched in polar residues; it reads SKASSIDTGTPKSEQPESVSTSD. A compositionally biased stretch (polar residues) spans 602–617; the sequence is QDFSEGQSSSEATMTS. A compositionally biased stretch (polar residues) spans 753-763; the sequence is ACSSVDSQPQQ.

Belongs to the Amer family.

It is found in the cell membrane. Its function is as follows. Regulator of the canonical Wnt signaling pathway. Acts by specifically binding phosphatidylinositol 4,5-bisphosphate (PtdIns(4,5)P2), translocating to the cell membrane. The protein is APC membrane recruitment protein 3 (Amer3) of Mus musculus (Mouse).